The sequence spans 165 residues: Austinoid biosynthesis cluster protein J (165 aa).

The protein belongs to the trt14 isomerase family. As to quaternary structure, homodimer.

The protein operates within secondary metabolite biosynthesis; terpenoid biosynthesis. Its function is as follows. Part of the gene cluster that mediates the biosynthesis of calidodehydroaustin, a fungal meroterpenoid. The first step of the pathway is the synthesis of 3,5-dimethylorsellinic acid by the polyketide synthase ausA. 3,5-dimethylorsellinic acid is then prenylated by the polyprenyl transferase ausN. Further epoxidation by the FAD-dependent monooxygenase ausM and cyclization by the probable terpene cyclase ausL lead to the formation of protoaustinoid A. Protoaustinoid A is then oxidized to spiro-lactone preaustinoid A3 by the combined action of the FAD-binding monooxygenases ausB and ausC, and the dioxygenase ausE. Acid-catalyzed keto-rearrangement and ring contraction of the tetraketide portion of preaustinoid A3 by ausJ lead to the formation of preaustinoid A4. The aldo-keto reductase ausK, with the help of ausH, is involved in the next step by transforming preaustinoid A4 into isoaustinone which is in turn hydroxylated by the P450 monooxygenase ausI to form austinolide. The cytochrome P450 monooxygenase ausG modifies austinolide to austinol. Austinol is further acetylated to austin by the O-acetyltransferase ausP, which spontaneously changes to dehydroaustin. The cytochrome P450 monooxygenase ausR then converts dehydroaustin is into 7-dehydrodehydroaustin. The hydroxylation catalyzed by ausR permits the O-acetyltransferase ausQ to add an additional acetyl group to the molecule, leading to the formation of acetoxydehydroaustin. The short chain dehydrogenase ausT catalyzes the reduction of the double bond present between carbon atoms 1 and 2 to convert 7-dehydrodehydroaustin into 1,2-dihydro-7-hydroxydehydroaustin. AusQ catalyzes not only an acetylation reaction but also the addition of the PKS ausV diketide product to 1,2-dihydro-7-hydroxydehydroaustin, forming precalidodehydroaustin. Finally, the iron/alpha-ketoglutarate-dependent dioxygenase converts precalidodehydroaustin into calidodehydroaustin. The polypeptide is Austinoid biosynthesis cluster protein J (Aspergillus calidoustus).